A 472-amino-acid polypeptide reads, in one-letter code: Adenosylhomocysteinase (472 aa).

3 residues coordinate substrate: Thr-61, Asp-136, and Glu-196. 197-199 (TTT) is a binding site for NAD(+). Lys-226 and Asp-230 together coordinate substrate. Residues Asn-231, 260-265 (GYGDVG), Glu-283, Asn-318, 339-341 (IGH), and Asn-384 contribute to the NAD(+) site.

Belongs to the adenosylhomocysteinase family. NAD(+) serves as cofactor.

It is found in the cytoplasm. It carries out the reaction S-adenosyl-L-homocysteine + H2O = L-homocysteine + adenosine. It participates in amino-acid biosynthesis; L-homocysteine biosynthesis; L-homocysteine from S-adenosyl-L-homocysteine: step 1/1. May play a key role in the regulation of the intracellular concentration of adenosylhomocysteine. The sequence is that of Adenosylhomocysteinase from Cupriavidus metallidurans (strain ATCC 43123 / DSM 2839 / NBRC 102507 / CH34) (Ralstonia metallidurans).